We begin with the raw amino-acid sequence, 530 residues long: White collar 2 protein (530 aa).

7 consecutive repeat copies span residues 9–12 (GSSM), 21–24 (GSGM), 25–28 (GSGM), 29–32 (GSGM), 33–36 (GTGM), 37–40 (GTGM), and 41–44 (GTGM). Residues 9–44 (GSSMYGFGAMGMGSGMGSGMGSGMGTGMGTGMGTGM) are 7 X 4 AA repeats of G-[SAT]-G-M. The segment at 134–158 (IATPTTTTSGPSGGPSSGGGSTLTE) is disordered. The span at 144–154 (PSGGPSSGGGS) shows a compositional bias: gly residues. Residues 162 to 232 (RRNWPAKVVE…AELNEAIATG (71 aa)) form the PAS domain. Residues 315 to 343 (REEQEEQEESHRTWRMSQEGRSDVTPSDD) form a disordered region. The segment at 468–493 (CTDCGTLDSPEWRKGPSGPKTLCNAC) adopts a GATA-type zinc-finger fold. The interval 504–530 (KNANNNNNGGGIGGHNDIHTPMGDHMG) is disordered.

As to quaternary structure, heterodimer of wc-1 and wc-2 (Potential). Binds to DNA.

The protein localises to the nucleus. Functionally, may function as a transcription factor involved in light regulation. Binds and affects blue light regulation of the al-3 gene. Wc-1 and wc-2 interact via homologous PAS domains, bind to promoters of light regulated genes such as frq, and activate transcription. May bind directly to frq. This Neurospora crassa (strain ATCC 24698 / 74-OR23-1A / CBS 708.71 / DSM 1257 / FGSC 987) protein is White collar 2 protein (wc-2).